A 661-amino-acid polypeptide reads, in one-letter code: DNA ligase (661 aa).

NAD(+) is bound by residues 31 to 35 (DKEYD), 79 to 80 (SL), and Glu-112. Residue Lys-114 is the N6-AMP-lysine intermediate of the active site. NAD(+) contacts are provided by Arg-135, Glu-169, Lys-281, and Lys-305. Zn(2+) is bound by residues Cys-398, Cys-401, Cys-414, and Cys-420. Positions 578 to 661 (QQENIFLGKT…ISEAEFEAML (84 aa)) constitute a BRCT domain.

It belongs to the NAD-dependent DNA ligase family. LigA subfamily. The cofactor is Mg(2+). Mn(2+) serves as cofactor.

The catalysed reaction is NAD(+) + (deoxyribonucleotide)n-3'-hydroxyl + 5'-phospho-(deoxyribonucleotide)m = (deoxyribonucleotide)n+m + AMP + beta-nicotinamide D-nucleotide.. Its function is as follows. DNA ligase that catalyzes the formation of phosphodiester linkages between 5'-phosphoryl and 3'-hydroxyl groups in double-stranded DNA using NAD as a coenzyme and as the energy source for the reaction. It is essential for DNA replication and repair of damaged DNA. This is DNA ligase from Alkaliphilus oremlandii (strain OhILAs) (Clostridium oremlandii (strain OhILAs)).